The chain runs to 150 residues: D-aminoacyl-tRNA deacylase (150 aa).

Positions 137–138 (GP) match the Gly-cisPro motif, important for rejection of L-amino acids motif.

This sequence belongs to the DTD family. In terms of assembly, homodimer.

It localises to the cytoplasm. The catalysed reaction is glycyl-tRNA(Ala) + H2O = tRNA(Ala) + glycine + H(+). The enzyme catalyses a D-aminoacyl-tRNA + H2O = a tRNA + a D-alpha-amino acid + H(+). An aminoacyl-tRNA editing enzyme that deacylates mischarged D-aminoacyl-tRNAs. Also deacylates mischarged glycyl-tRNA(Ala), protecting cells against glycine mischarging by AlaRS. Acts via tRNA-based rather than protein-based catalysis; rejects L-amino acids rather than detecting D-amino acids in the active site. By recycling D-aminoacyl-tRNA to D-amino acids and free tRNA molecules, this enzyme counteracts the toxicity associated with the formation of D-aminoacyl-tRNA entities in vivo and helps enforce protein L-homochirality. This Geotalea daltonii (strain DSM 22248 / JCM 15807 / FRC-32) (Geobacter daltonii) protein is D-aminoacyl-tRNA deacylase.